The chain runs to 643 residues: MPIITLPDGSQRQFDNPVSVLEVAQDIGAGLAKATIAGRVNGERHDACDIIEQDATLEIITAKDEDGLEIIRHSCAHLLGHAIKQLFPDVKMAIGPTIENGFYYDVDLDRSLTQEDIDAIEKRMLELAKTNYDVVKKRVTWQEARDTFEKRGEPYKMAILDENIERTAMPALYHHLEYIDMCRGPHVPNMRFCQHFKLQKVAGAYWRGDSKNKMLQRIYGTAWADKKQLAEYLTRLEEAAKRDHRKIGKALDLYHMQEEAPGMVFWHNDGWTIFRELETFVRTKLKQYDYQEVKGPFMMDRVLWEKTGHWQNYADLMFTTQSENREYAIKPMNCPGHVQIFNQGLKSYRDLPIRMAEFGSCHRNEPSGSLHGLMRVRGFTQDDAHIFCTEDQIESEVTSCIKMVYDIYSTFGFTNIAVKLSTRPENRIGSDEMWDRAEAGLAAALAHNGLEYEIQEGEGAFYGPKIEFALRDCLGREWQCGTVQLDFALPGRLDATYVAEDNSRKTPVMIHRAILGSIERFIGIITEEYAGFFPAWLAPTQAVVMNITDSQADYVQKVAKQLSDVGLRVKTDLRNEKVGFKIREHTLRRVPYMLVCGDKEIAEGKVAVRTRKGADLGTFTVEEFAEILKNQVRSRELKLLNEE.

The 61-residue stretch at 1-61 folds into the TGS domain; it reads MPIITLPDGS…EQDATLEIIT (61 aa). Positions 243-534 are catalytic; that stretch reads DHRKIGKALD…ITEEYAGFFP (292 aa). Zn(2+)-binding residues include Cys334, His385, and His511.

This sequence belongs to the class-II aminoacyl-tRNA synthetase family. In terms of assembly, homodimer. Zn(2+) is required as a cofactor.

The protein localises to the cytoplasm. It carries out the reaction tRNA(Thr) + L-threonine + ATP = L-threonyl-tRNA(Thr) + AMP + diphosphate + H(+). In terms of biological role, catalyzes the attachment of threonine to tRNA(Thr) in a two-step reaction: L-threonine is first activated by ATP to form Thr-AMP and then transferred to the acceptor end of tRNA(Thr). Also edits incorrectly charged L-seryl-tRNA(Thr). This Haemophilus influenzae (strain PittGG) protein is Threonine--tRNA ligase.